The sequence spans 720 residues: Phenylalanine--tRNA ligase beta subunit, chloroplastic (720 aa).

The B5 domain occupies 319–404 (NSTLNIDISL…RVYGYNQFQS (86 aa)). Mg(2+) is bound by residues Asp-382, Asp-388, Glu-391, and Glu-392. One can recognise an FDX-ACB domain in the interval 626 to 719 (SKYPCITRDL…IIKKLNLEIR (94 aa)).

The protein belongs to the phenylalanyl-tRNA synthetase beta subunit family. Type 1 subfamily. Tetramer of two alpha and two beta subunits. Requires Mg(2+) as cofactor.

The protein resides in the plastid. Its subcellular location is the chloroplast. The enzyme catalyses tRNA(Phe) + L-phenylalanine + ATP = L-phenylalanyl-tRNA(Phe) + AMP + diphosphate + H(+). The protein is Phenylalanine--tRNA ligase beta subunit, chloroplastic (pheT) of Porphyra purpurea (Red seaweed).